We begin with the raw amino-acid sequence, 555 residues long: Wee1-like protein kinase 2-A (555 aa).

Disordered regions lie at residues 1–81 and 149–175; these read MRTA…SVGA and FTPE…DCRT. The span at 38-48 shows a compositional bias: polar residues; it reads SPVSSWRTNNC. The span at 68–78 shows a compositional bias: low complexity; that stretch reads SPSSDYSPDPS. Polar residues predominate over residues 149 to 160; the sequence is FTPESYRQTHFQ. The Protein kinase domain occupies 210 to 480; that stretch reads FLEIEKIGAG…AASLAKNSVL (271 aa). Residues 216-224 and Lys239 contribute to the ATP site; that span reads IGAGEFGSV. The active-site Proton acceptor is the Asp337. The Mg(2+) site is built by Asn342 and Asp374. The stretch at 487 to 513 forms a coiled coil; that stretch reads AAQLQKQLNVEKFKTAMLERELKAAKL. The residue at position 549 (Ser549) is a Phosphoserine.

Belongs to the protein kinase superfamily. Ser/Thr protein kinase family. WEE1 subfamily. In terms of assembly, interacts with prmt5; this promotes protesomal degradation of wee2-a in the nucleus. The interaction with prmt5 is disrupted upon activation of the DNA replication checkpoint. Subject to proteasomal degradation in the nucleus. Detected in egg (at protein level). Oocyte-specific maternally supplied protein. Present in immature and mature oocytes and in early (pregastrula) embryos, but not in post-gastrula embryos.

The protein localises to the nucleus. Its subcellular location is the cytoplasm. It localises to the cytosol. It carries out the reaction L-tyrosyl-[protein] + ATP = O-phospho-L-tyrosyl-[protein] + ADP + H(+). Its function is as follows. Oocyte-specific protein tyrosine kinase that phosphorylates and inhibits cdk1 and acts as a key regulator of meiosis. Required to maintain meiotic arrest in oocytes by phosphorylating cdk1 at 'Tyr-15', which inhibits cdk1 activity and prevents meiotic reentry. Negative regulator of mitosis. Involved in the mitotic DNA replication checkpoint. The sequence is that of Wee1-like protein kinase 2-A (wee2-a) from Xenopus laevis (African clawed frog).